Reading from the N-terminus, the 270-residue chain is Oxidized low-density lipoprotein receptor 1 (270 aa).

The span at methionine 1–aspartate 14 shows a compositional bias: basic and acidic residues. Residues methionine 1 to alanine 22 form a disordered region. The Cytoplasmic segment spans residues methionine 1–proline 33. A helical; Signal-anchor for type II membrane protein membrane pass occupies residues alanine 34–leucine 56. Cysteine 42 carries the S-palmitoyl cysteine lipid modification. The tract at residues serine 57–tryptophan 146 is neck. At serine 57–glutamine 270 the chain is on the extracellular side. Residues asparagine 69 and asparagine 135 are each glycosylated (N-linked (GlcNAc...) asparagine). A coiled-coil region spans residues arginine 85–asparagine 135. 3 disulfides stabilise this stretch: cysteine 140–cysteine 151, cysteine 168–cysteine 260, and cysteine 239–cysteine 252. The C-type lectin domain maps to histidine 147–glutamine 261.

In terms of assembly, homodimer; disulfide-linked. May form a hexamer composed of 3 homodimers. Interacts with HSP70. N-glycosylated. In terms of tissue distribution, highly expressed in endothelial cells, aortic intima and lung. Expressed at low level in other tissues.

The protein localises to the cell membrane. The protein resides in the membrane raft. It is found in the secreted. Functionally, receptor that mediates the recognition, internalization and degradation of oxidatively modified low density lipoprotein (oxLDL) by vascular endothelial cells. OxLDL is a marker of atherosclerosis that induces vascular endothelial cell activation and dysfunction, resulting in pro-inflammatory responses, pro-oxidative conditions and apoptosis. Its association with oxLDL induces the activation of NF-kappa-B through an increased production of intracellular reactive oxygen and a variety of pro-atherogenic cellular responses including a reduction of nitric oxide (NO) release, monocyte adhesion and apoptosis. In addition to binding oxLDL, it acts as a receptor for the HSP70 protein involved in antigen cross-presentation to naive T-cells in dendritic cells, thereby participating in cell-mediated antigen cross-presentation. Also involved in inflammatory process, by acting as a leukocyte-adhesion molecule at the vascular interface in endotoxin-induced inflammation. Also acts as a receptor for advanced glycation end (AGE) products, activated platelets, monocytes, apoptotic cells and both Gram-negative and Gram-positive bacteria. The chain is Oxidized low-density lipoprotein receptor 1 (OLR1) from Bos taurus (Bovine).